Reading from the N-terminus, the 353-residue chain is DNA polymerase IV (353 aa).

Residues 6 to 187 (IIHIDCDCFY…LPVTKLHGVG (182 aa)) enclose the UmuC domain. Residues aspartate 10 and aspartate 105 each coordinate Mg(2+). Glutamate 106 is a catalytic residue.

This sequence belongs to the DNA polymerase type-Y family. In terms of assembly, monomer. Mg(2+) serves as cofactor.

The protein localises to the cytoplasm. It catalyses the reaction DNA(n) + a 2'-deoxyribonucleoside 5'-triphosphate = DNA(n+1) + diphosphate. Poorly processive, error-prone DNA polymerase involved in untargeted mutagenesis. Copies undamaged DNA at stalled replication forks, which arise in vivo from mismatched or misaligned primer ends. These misaligned primers can be extended by PolIV. Exhibits no 3'-5' exonuclease (proofreading) activity. May be involved in translesional synthesis, in conjunction with the beta clamp from PolIII. This Pseudomonas savastanoi pv. phaseolicola (strain 1448A / Race 6) (Pseudomonas syringae pv. phaseolicola (strain 1448A / Race 6)) protein is DNA polymerase IV.